We begin with the raw amino-acid sequence, 300 residues long: NAD kinase (300 aa).

D75 serves as the catalytic Proton acceptor. NAD(+) is bound by residues 75–76 (DG), 149–150 (ND), R177, D179, 190–195 (TAYALS), A214, and Q248.

It belongs to the NAD kinase family. A divalent metal cation serves as cofactor.

It localises to the cytoplasm. The enzyme catalyses NAD(+) + ATP = ADP + NADP(+) + H(+). Functionally, involved in the regulation of the intracellular balance of NAD and NADP, and is a key enzyme in the biosynthesis of NADP. Catalyzes specifically the phosphorylation on 2'-hydroxyl of the adenosine moiety of NAD to yield NADP. This Burkholderia vietnamiensis (strain G4 / LMG 22486) (Burkholderia cepacia (strain R1808)) protein is NAD kinase.